Consider the following 570-residue polypeptide: High-affinity hexose transporter HXT6 (570 aa).

The Cytoplasmic portion of the chain corresponds to 1 to 60; that stretch reads MSQDAAIAEQTPVEHLSAVDSASHSVLSTPSNKAERDEIKAYGEGEEHEPVVEIPKRPAS. Residues 61–81 traverse the membrane as a helical segment; it reads AYVTVSIMCIMIAFGGFVFGW. Over 82–116 the chain is Extracellular; that stretch reads DTGTISGFINQTDFIRRFGMKHKDGTNYLSKVRTG. N91 is a glycosylation site (N-linked (GlcNAc...) asparagine). Residues 117 to 137 form a helical membrane-spanning segment; the sequence is LIVSIFNIGCAIGGIILSKLG. At 138–143 the chain is on the cytoplasmic side; that stretch reads DMYGRK. Residues 144–164 traverse the membrane as a helical segment; it reads VGLIVVVVIYIIGIIIQIASI. The Extracellular portion of the chain corresponds to 165–174; that stretch reads NKWYQYFIGR. The helical transmembrane segment at 175 to 195 threads the bilayer; sequence IISGLGVGGIAVLSPMLISEV. At 196–201 the chain is on the cytoplasmic side; it reads SPKHLR. A helical transmembrane segment spans residues 202–222; the sequence is GTLVSCYQLMITAGIFLGYCT. Over 223–236 the chain is Extracellular; sequence NFGTKNYSNSVQWR. Residue N228 is glycosylated (N-linked (GlcNAc...) asparagine). Residues 237 to 257 traverse the membrane as a helical segment; it reads VPLGLCFAWALFMIGGMTFVP. Over 258 to 340 the chain is Cytoplasmic; the sequence is ESPRYLAEVG…IQSLQQLTGD (83 aa). The helical transmembrane segment at 341–357 threads the bilayer; sequence NYFFYYGTTIFKAVGLS. Topologically, residues 358–363 are extracellular; that stretch reads DSFETS. Residues 364–381 traverse the membrane as a helical segment; it reads IVLGIVNFASTFVGIYVV. Topologically, residues 382–388 are cytoplasmic; the sequence is ERYGRRT. The helical transmembrane segment at 389–409 threads the bilayer; the sequence is CLLWGAASMTACMVVYASVGV. The Extracellular portion of the chain corresponds to 410 to 431; the sequence is TRLWPNGQDQPSSKGAGNCMIV. Residues 432-452 traverse the membrane as a helical segment; that stretch reads FACFYIFCFATTWAPIPYVVV. The Cytoplasmic segment spans residues 453–469; sequence SETFPLRVKSKAMSIAT. A helical transmembrane segment spans residues 470–490; that stretch reads AANWLWGFLIGFFTPFITGAI. Position 491 (N491) is a topological domain, extracellular. Residues 492 to 512 form a helical membrane-spanning segment; sequence FYYGYVFMGCLVFMFFYVLLV. The Cytoplasmic portion of the chain corresponds to 513 to 570; it reads VPETKGLTLEEVNTMWEEGVLPWKSASWVPPSRRGANYDAEEMAHDDKPLYKRMFSTK. K560 participates in a covalent cross-link: Glycyl lysine isopeptide (Lys-Gly) (interchain with G-Cter in ubiquitin).

This sequence belongs to the major facilitator superfamily. Sugar transporter (TC 2.A.1.1) family.

It localises to the membrane. High-affinity glucose transporter. The chain is High-affinity hexose transporter HXT6 (HXT6) from Saccharomyces cerevisiae (strain ATCC 204508 / S288c) (Baker's yeast).